Reading from the N-terminus, the 91-residue chain is Cell division protein FtsB (91 aa).

The Cytoplasmic segment spans residues 1-3 (MRW). Residues 4 to 21 (PVIILAVLVVVLQYPLWL) traverse the membrane as a helical segment. Topologically, residues 22–91 (GKGGWLRVWE…EIFVQVPQKH (70 aa)) are periplasmic. The stretch at 28–72 (RVWEVDRKLHEQREENTRLEERNAGLDAEVRDLKSGNEAIEERAR) forms a coiled coil.

The protein belongs to the FtsB family. As to quaternary structure, part of a complex composed of FtsB, FtsL and FtsQ.

The protein resides in the cell inner membrane. Its function is as follows. Essential cell division protein. May link together the upstream cell division proteins, which are predominantly cytoplasmic, with the downstream cell division proteins, which are predominantly periplasmic. This is Cell division protein FtsB from Azoarcus sp. (strain BH72).